An 81-amino-acid polypeptide reads, in one-letter code: MAHSVKIYDTCIGCTQCVRACPTDVLEMIPWDGCKASQIASAPRTEDCVGCKRCESACPTDFLSVRVYLGSETTRSMGLAY.

2 consecutive 4Fe-4S ferredoxin-type domains span residues Ala-2–Trp-31 and Ile-39–Tyr-68. [4Fe-4S] cluster contacts are provided by Cys-11, Cys-14, Cys-17, Cys-21, Cys-48, Cys-51, Cys-54, and Cys-58.

The eukaryotic PSI reaction center is composed of at least 11 subunits. [4Fe-4S] cluster is required as a cofactor.

Its subcellular location is the plastid. The protein localises to the chloroplast thylakoid membrane. It catalyses the reaction reduced [plastocyanin] + hnu + oxidized [2Fe-2S]-[ferredoxin] = oxidized [plastocyanin] + reduced [2Fe-2S]-[ferredoxin]. Its function is as follows. Apoprotein for the two 4Fe-4S centers FA and FB of photosystem I (PSI); essential for photochemical activity. FB is the terminal electron acceptor of PSI, donating electrons to ferredoxin. The C-terminus interacts with PsaA/B/D and helps assemble the protein into the PSI complex. Required for binding of PsaD and PsaE to PSI. PSI is a plastocyanin-ferredoxin oxidoreductase, converting photonic excitation into a charge separation, which transfers an electron from the donor P700 chlorophyll pair to the spectroscopically characterized acceptors A0, A1, FX, FA and FB in turn. The sequence is that of Photosystem I iron-sulfur center from Staurastrum punctulatum (Green alga).